The chain runs to 416 residues: Probable pectate lyase 8 (416 aa).

The first 24 residues, 1–24, serve as a signal peptide directing secretion; the sequence is MAVTKLILFASALLLTALFIGVNA. N-linked (GlcNAc...) asparagine glycosylation is found at asparagine 23, asparagine 28, and asparagine 52. Residues aspartate 214, aspartate 238, and aspartate 242 each contribute to the Ca(2+) site. Arginine 294 is a catalytic residue.

It belongs to the polysaccharide lyase 1 family. The cofactor is Ca(2+).

It carries out the reaction Eliminative cleavage of (1-&gt;4)-alpha-D-galacturonan to give oligosaccharides with 4-deoxy-alpha-D-galact-4-enuronosyl groups at their non-reducing ends.. The protein operates within glycan metabolism; pectin degradation; 2-dehydro-3-deoxy-D-gluconate from pectin: step 2/5. The protein is Probable pectate lyase 8 of Arabidopsis thaliana (Mouse-ear cress).